We begin with the raw amino-acid sequence, 598 residues long: Elongation factor 4 (598 aa).

Positions 4 to 186 (INIRNFAIIA…AIVSRLPAPS (183 aa)) constitute a tr-type G domain. GTP contacts are provided by residues 16-21 (DHGKST) and 133-136 (NKID).

The protein belongs to the TRAFAC class translation factor GTPase superfamily. Classic translation factor GTPase family. LepA subfamily.

It localises to the cell inner membrane. The catalysed reaction is GTP + H2O = GDP + phosphate + H(+). Functionally, required for accurate and efficient protein synthesis under certain stress conditions. May act as a fidelity factor of the translation reaction, by catalyzing a one-codon backward translocation of tRNAs on improperly translocated ribosomes. Back-translocation proceeds from a post-translocation (POST) complex to a pre-translocation (PRE) complex, thus giving elongation factor G a second chance to translocate the tRNAs correctly. Binds to ribosomes in a GTP-dependent manner. In Ehrlichia ruminantium (strain Gardel), this protein is Elongation factor 4.